Reading from the N-terminus, the 413-residue chain is L-arginine-specific L-amino acid ligase (413 aa).

The 198-residue stretch at 115–312 (KTKLKMEGIP…LWESSLNISV (198 aa)) folds into the ATP-grasp domain. 141-202 (GEKLGWPIIV…EKCIEMEEFH (62 aa)) is an ATP binding site. 2 residues coordinate Mg(2+): Glu-268 and Glu-281. Mn(2+) is bound by residues Glu-268 and Glu-281.

In terms of assembly, homodimer. It depends on Mg(2+) as a cofactor. The cofactor is Mn(2+). Co(2+) serves as cofactor.

The enzyme catalyses an L-alpha-amino acid + L-arginine + ATP = L-arginyl-L-alpha-amino acid + ADP + phosphate + H(+). Catalyzes the synthesis of Arg-Xaa dipeptides in an ATP-dependent manner. Has strict specificity toward arginine as the N-terminal substrate. This chain is L-arginine-specific L-amino acid ligase, found in Bacillus subtilis.